A 206-amino-acid chain; its full sequence is Cytochrome c oxidase assembly protein CtaG (206 aa).

Topologically, residues 1–22 (MTEQPTNRNDVPRRGLGRDATV) are cytoplasmic. The helical; Signal-anchor for type II membrane protein transmembrane segment at 23–43 (ASICGLVVALMVGASYAAVPF) threads the bilayer. Topologically, residues 44–206 (YNWFCRATGF…GEPDSRKGAL (163 aa)) are periplasmic.

Belongs to the COX11/CtaG family.

It localises to the cell inner membrane. Functionally, exerts its effect at some terminal stage of cytochrome c oxidase synthesis, probably by being involved in the insertion of the copper B into subunit I. The chain is Cytochrome c oxidase assembly protein CtaG from Rhodopseudomonas palustris (strain BisB18).